Reading from the N-terminus, the 678-residue chain is Probable antibacterial peptide polyprotein (678 aa).

Repeat copies occupy residues 1-67 (MRSP…PEVR), 68-114 (ERRS…PEVR), 115-161 (ERRS…PEVR), 162-208 (ERRS…PEVR), 209-255 (ERRS…PEVR), 256-302 (ERGS…PEVR), 303-349 (ERRS…PEVR), 350-396 (ERRS…PEVR), 397-443 (ERRS…PEVR), 444-490 (ERRS…PEVR), 491-537 (ERRS…PEVR), 538-584 (ERRS…PEVR), 585-631 (ERRS…PEVR), and 632-678 (ERRS…PEVR). The 14 X approximate tandem repeats stretch occupies residues 1-678 (MRSPRVIHLA…SEGVVLPEVR (678 aa)). Thr32 carries an O-linked (GalNAc...) threonine glycan. Disordered regions lie at residues 58 to 97 (SEAE…DASL) and 113 to 678 (VRER…PEVR). Residues 64–73 (PEVRERRSPV) show a composition bias toward basic and acidic residues. Thr83 and Thr130 each carry an O-linked (GalNAc...) threonine glycan. Positions 145–157 (ESELSPLSEAEVL) are enriched in low complexity. The span at 158–167 (PEVRERRSPV) shows a compositional bias: basic and acidic residues. O-linked (GalNAc...) threonine glycosylation occurs at Thr177. Over residues 188-204 (VASLESELSPLSEAEVL) the composition is skewed to low complexity. Residues 205-214 (PEVRERRSPV) are compositionally biased toward basic and acidic residues. O-linked (GalNAc...) threonine glycans are attached at residues Thr224 and Thr271. The segment covering 299–308 (PEVRERRSPV) has biased composition (basic and acidic residues). O-linked (GalNAc...) threonine glycosylation occurs at Thr318. Residues 333–345 (ESELSPLSEAEVL) show a composition bias toward low complexity. Positions 346–355 (PEVRERRSPV) are enriched in basic and acidic residues. Thr365 carries O-linked (GalNAc...) threonine glycosylation. A compositionally biased stretch (low complexity) spans 380 to 392 (ESELSPLSEAEVL). Over residues 393–402 (PEVRERRSPV) the composition is skewed to basic and acidic residues. A glycan (O-linked (GalNAc...) threonine) is linked at Thr412. Residues 427-439 (ESELSPLSEAEVL) are compositionally biased toward low complexity. Positions 440–449 (PEVRERRSPV) are enriched in basic and acidic residues. Residue Thr459 is glycosylated (O-linked (GalNAc...) threonine). A compositionally biased stretch (low complexity) spans 474–486 (ESELSPLSEAEVL). Over residues 487–496 (PEVRERRSPV) the composition is skewed to basic and acidic residues. O-linked (GalNAc...) threonine glycosylation is present at Thr506. A compositionally biased stretch (low complexity) spans 521-533 (ESELSPSSEAEVL). The span at 534 to 543 (PEVRERRSPV) shows a compositional bias: basic and acidic residues. An O-linked (GalNAc...) threonine glycan is attached at Thr553. A compositionally biased stretch (low complexity) spans 568–580 (ESELSPLSEAEVL). A compositionally biased stretch (basic and acidic residues) spans 581 to 590 (PEVRERRSPV). Thr600 is a glycosylation site (O-linked (GalNAc...) threonine). A compositionally biased stretch (low complexity) spans 615–627 (ESELSPLSEAEGL). A glycan (O-linked (GalNAc...) threonine) is linked at Thr647.

The protein resides in the secreted. Functionally, has antibacterial activity in vitro. In Riptortus clavatus (Bean bug), this protein is Probable antibacterial peptide polyprotein.